The following is a 179-amino-acid chain: Trypsin inhibitor (179 aa).

Gln-1 bears the Pyrrolidone carboxylic acid mark. Cystine bridges form between Cys-40-Cys-85 and Cys-132-Cys-143.

It belongs to the protease inhibitor I3 (leguminous Kunitz-type inhibitor) family. As to quaternary structure, heterodimer of an alpha and a beta chain linked by a disulfide bond. Abundant in dry seeds.

The protein resides in the secreted. Inhibits trypsin, plasmin, human plasma kallikrein, chymotrypsin and factor XIIa activity. The protein is Trypsin inhibitor of Leucaena leucocephala (White popinac).